A 496-amino-acid polypeptide reads, in one-letter code: uncharacterized protein (496 aa).

The next 13 membrane-spanning stretches (helical) occupy residues 5–25 (LTAL…GFLA), 45–65 (FGGL…YTFL), 77–97 (VAFF…FFLP), 127–147 (LVAI…LSGI), 161–181 (VKFV…FSGI), 193–213 (ILVW…HFNG), 239–259 (IPWF…WAHA), 278–298 (FLPL…IAFL), 325–345 (FAYA…AIGA), 374–394 (MVFV…TALV), 396–416 (LQLL…VSLF), 424–444 (ATVI…ITQS), and 450–470 (EGFW…PLFV).

This sequence belongs to the sodium:solute symporter (SSF) (TC 2.A.21) family.

The protein resides in the cell membrane. This is an uncharacterized protein from Bacillus subtilis (strain 168).